The following is a 718-amino-acid chain: MRAVLEAADIAVVALYFILVMCIGFFAMWKSNRSTVSGYFLAGRSMTWVAIGASLFVSNIGSEHFIGLAGSGAASGFAVGAWEFNALLLLQLLGWVFIPIYIRSGVYTMPEYLSKRFGGHRIQVYFAALSLLLYIFTKLSVDLYSGALFIQESLGWNLYVSVILLIGMTALLTVTGGLVAVIYTDTLQALLMIIGALTLMVISMVKIGGFEEVKRRYMLASPDVASILLKYNLSNTNACMVHPKANALKMLRDPTDEDVPWPGFILGQTPASVWYWCADQVIVQRVLAAKNIAHAKGSTLMAGFLKLLPMFIIVVPGMISRIVFADEIACINPEHCMQVCGSRAGCSNIAYPRLVMTLVPVGLRGLMMAVMIAALMSDLDSIFNSASTIFTLDVYKLIRKSASSRELMIVGRIFVAFMVVISIAWVPIIVEMQGGQMYLYIQEVADYLTPPVAALFLLAIFWKRCNEQGAFYGGMAGFVLGAVRLILAFTYRAPECDQPDNRPGFIKDIHYMYVATALFWITGLITVIVSLLTPPPTKDQIRTTTFWSKKTLVTKESCSQKDEPYKMQEKSILQCSENSEVISHTIPNGKSEDSIKGLQPEDVNLLVTCREEGNPVASMGHSEAETPVDAYSNGQAALMGEREREKETENRSRYWKFIDWFCGFKSKSLSKRSLRDLMDEEAVCLQMLEETPQVKVILNIGLFAVCSLGIFMFVYFSL.

At 1–9 (MRAVLEAAD) the chain is on the extracellular side. Residues 10 to 29 (IAVVALYFILVMCIGFFAMW) form a helical membrane-spanning segment. Over 30-38 (KSNRSTVSG) the chain is Cytoplasmic. A helical membrane pass occupies residues 39-57 (YFLAGRSMTWVAIGASLFV). The Extracellular portion of the chain corresponds to 58-86 (SNIGSEHFIGLAGSGAASGFAVGAWEFNA). The helical transmembrane segment at 87 to 110 (LLLLQLLGWVFIPIYIRSGVYTMP) threads the bilayer. The Cytoplasmic segment spans residues 111–123 (EYLSKRFGGHRIQ). The chain crosses the membrane as a helical span at residues 124–144 (VYFAALSLLLYIFTKLSVDLY). The Extracellular portion of the chain corresponds to 145 to 157 (SGALFIQESLGWN). A helical transmembrane segment spans residues 158–183 (LYVSVILLIGMTALLTVTGGLVAVIY). Residues 184–186 (TDT) are Cytoplasmic-facing. Residues 187–205 (LQALLMIIGALTLMVISMV) form a helical membrane-spanning segment. Residues 206–303 (KIGGFEEVKR…HAKGSTLMAG (98 aa)) lie on the Extracellular side of the membrane. N232 carries an N-linked (GlcNAc...) asparagine glycan. The helical transmembrane segment at 304–324 (FLKLLPMFIIVVPGMISRIVF) threads the bilayer. At 325–353 (ADEIACINPEHCMQVCGSRAGCSNIAYPR) the chain is on the cytoplasmic side. Residues 354–376 (LVMTLVPVGLRGLMMAVMIAALM) traverse the membrane as a helical segment. Over 377 to 406 (SDLDSIFNSASTIFTLDVYKLIRKSASSRE) the chain is Extracellular. A helical transmembrane segment spans residues 407–430 (LMIVGRIFVAFMVVISIAWVPIIV). Residues 431 to 443 (EMQGGQMYLYIQE) are Cytoplasmic-facing. The helical transmembrane segment at 444–462 (VADYLTPPVAALFLLAIFW) threads the bilayer. Residues 463-510 (KRCNEQGAFYGGMAGFVLGAVRLILAFTYRAPECDQPDNRPGFIKDIH) are Extracellular-facing. A helical membrane pass occupies residues 511-532 (YMYVATALFWITGLITVIVSLL). Topologically, residues 533–695 (TPPPTKDQIR…QMLEETPQVK (163 aa)) are cytoplasmic. Residues S594 and S632 each carry the phosphoserine modification. The helical transmembrane segment at 696-716 (VILNIGLFAVCSLGIFMFVYF) threads the bilayer. The Extracellular segment spans residues 717-718 (SL).

It belongs to the sodium:solute symporter (SSF) (TC 2.A.21) family. As to quaternary structure, interacts with KCNQ2 (via the pore module). Interacts with KCNQ1; this interaction is direct. Forms coregulatory complexes with ion channels KCNQ2-KCNQ3 and KCNQ1-KCNE2. As to expression, highly expressed in kidney, placenta, and brain and at a lesser extent in thymus, lung, bladder, and testes. Expressed in the choroid plexus epithelium (at protein level).

The protein localises to the apical cell membrane. The protein resides in the basolateral cell membrane. It catalyses the reaction myo-inositol(out) + 2 Na(+)(out) = myo-inositol(in) + 2 Na(+)(in). The catalysed reaction is scyllo-inositol(out) + 2 Na(+)(out) = scyllo-inositol(in) + 2 Na(+)(in). Functionally, electrogenic Na(+)-coupled sugar symporter that actively transports myo-inositol and its stereoisomer scyllo-inositol across the plasma membrane, with a Na(+) to sugar coupling ratio of 2:1. Maintains myo-inositol concentration gradient that defines cell volume and fluid balance during osmotic stress, in particular in the fetoplacental unit and central nervous system. Forms coregulatory complexes with voltage-gated K(+) ion channels, allosterically altering ion selectivity, voltage dependence and gating kinetics of the channel. In turn, K(+) efflux through the channel forms a local electrical gradient that modulates electrogenic Na(+)-coupled myo-inositol influx through the transporter. Associates with KCNQ1-KCNE2 channel in the apical membrane of choroid plexus epithelium and regulates the myo-inositol gradient between blood and cerebrospinal fluid with an impact on neuron excitability. Associates with KCNQ2-KCNQ3 channel altering ion selectivity, increasing Na(+) and Cs(+) permeation relative to K(+) permeation. Provides myo-inositol precursor for biosynthesis of phosphoinositides such as PI(4,5)P2, thus indirectly affecting the activity of phosphoinositide-dependent ion channels and Ca(2+) signaling upon osmotic stress. (Microbial infection) Functions as a retroviral receptor for M813 murine leukemia virus (MuLV) entry. This Mus musculus (Mouse) protein is Sodium/myo-inositol cotransporter (Slc5a3).